Consider the following 168-residue polypeptide: S-ribosylhomocysteine lyase (168 aa).

His-54, His-58, and Cys-128 together coordinate Fe cation.

The protein belongs to the LuxS family. As to quaternary structure, homodimer. It depends on Fe cation as a cofactor.

It carries out the reaction S-(5-deoxy-D-ribos-5-yl)-L-homocysteine = (S)-4,5-dihydroxypentane-2,3-dione + L-homocysteine. Involved in the synthesis of autoinducer 2 (AI-2) which is secreted by bacteria and is used to communicate both the cell density and the metabolic potential of the environment. The regulation of gene expression in response to changes in cell density is called quorum sensing. Catalyzes the transformation of S-ribosylhomocysteine (RHC) to homocysteine (HC) and 4,5-dihydroxy-2,3-pentadione (DPD). This is S-ribosylhomocysteine lyase from Neisseria gonorrhoeae (strain ATCC 700825 / FA 1090).